A 712-amino-acid chain; its full sequence is Phosphatase and actin regulator 4 (712 aa).

Disordered stretches follow at residues 1 to 22 and 90 to 405; these read MGQA…GQPT and RGLL…EVPK. Residues 72 to 97 form an RPEL 1 repeat; the sequence is EVLERKISMRKPREELVKRGLLLEDS. Positions 114-124 are enriched in polar residues; sequence NGHTTLIGSTR. Ser-125, Ser-127, Ser-140, and Ser-156 each carry phosphoserine. The segment covering 136–152 has biased composition (basic and acidic residues); it reads ERIASLRKPVPEEEPKK. The span at 198 to 230 shows a compositional bias: low complexity; the sequence is ATSSGSLARPSSSASTTAITTAPAATMAATNPA. A compositionally biased stretch (polar residues) spans 233-243; it reads VHSSGPPSQAP. Residues 245–267 show a composition bias toward low complexity; it reads TLPAAPASTHTTATLSLTHTGPA. 3 positions are modified to phosphoserine: Ser-282, Ser-303, and Ser-353. Residues 345–357 are compositionally biased toward low complexity; the sequence is SEPLLTPSSSPLP. Pro residues predominate over residues 358–371; that stretch reads AHIPPEPPQSPPFP. The residue at position 436 (Ser-436) is a Phosphoserine. Position 441 is a phosphothreonine (Thr-441). Ser-452, Ser-462, Ser-473, Ser-524, Ser-526, Ser-567, and Ser-600 each carry phosphoserine. Residues 507–557 are disordered; it reads VIPKLPQCLQEEEEGKESDSDSEGPIQYRDEEDEDESHHSALANKVKRKDT. Positions 516–528 are enriched in acidic residues; sequence QEEEEGKESDSDS. RPEL repeat units lie at residues 593–618 and 631–656; these read NTLI…QPKN and RRLT…RFNE. The disordered stretch occupies residues 602–626; it reads RPTPEELEQRNILQPKNEADRQAEK. Residue Ser-638 is modified to Phosphoserine.

It belongs to the phosphatase and actin regulator family. As to quaternary structure, binds PPP1CA and actin.

It is found in the cytoplasm. It localises to the cell projection. Its subcellular location is the lamellipodium. Functionally, regulator of protein phosphatase 1 (PP1) required for neural tube and optic fissure closure, and enteric neural crest cell (ENCCs) migration during development. Acts as an activator of PP1 by interacting with PPP1CA and preventing phosphorylation of PPP1CA at 'Thr-320'. During neural tube closure, localizes to the ventral neural tube and activates PP1, leading to down-regulate cell proliferation within cranial neural tissue and the neural retina. Also acts as a regulator of migration of enteric neural crest cells (ENCCs) by activating PP1, leading to dephosphorylation and subsequent activation of cofilin (COF1 or COF2) and repression of the integrin signaling through the RHO/ROCK pathway. The protein is Phosphatase and actin regulator 4 (PHACTR4) of Bos taurus (Bovine).